We begin with the raw amino-acid sequence, 304 residues long: MAEITAKMVAELRARTGAGMMDCKKALMETGGDFDKAVDWLREKGLAAAAKKAGRVAAEGRVHAIVEDGARHGVLVEVNCETDFVARGEAFINLCDHVARVILQARPASLEALQEALGDTVKEAVAKIGENIQVRRFERYEVADAGRVHAYIHGDGRVGVLIELTTATPEVAAHPEVEALCHELALQIASMRAQYVRPEDVPAQVIEHEREILKAQAINEGKKPEIAEKMVAGRIQKFFQEVCLLEQEWVKDSKKTVGALVKEVAGKVGGEITVKRFVRYEKGEGIEKRQDDFAEEVMRQAGLK.

Positions 82-85 (TDFV) are involved in Mg(2+) ion dislocation from EF-Tu.

This sequence belongs to the EF-Ts family.

The protein resides in the cytoplasm. Its function is as follows. Associates with the EF-Tu.GDP complex and induces the exchange of GDP to GTP. It remains bound to the aminoacyl-tRNA.EF-Tu.GTP complex up to the GTP hydrolysis stage on the ribosome. This Symbiobacterium thermophilum (strain DSM 24528 / JCM 14929 / IAM 14863 / T) protein is Elongation factor Ts.